The sequence spans 1116 residues: Large proline-rich protein bag6-B (1116 aa).

The 76-residue stretch at 7-82 (MDVTVKTLDS…HLVERAPPQT (76 aa)) folds into the Ubiquitin-like domain. Disordered stretches follow at residues 76 to 114 (ERAP…RNGN), 170 to 221 (EGQP…PSEY), 329 to 385 (STTG…HPHP), 473 to 502 (PAAP…APGA), 533 to 589 (GGSS…GTDQ), 640 to 678 (VPVS…ESLP), and 1058 to 1080 (TGAK…EAQG). The segment covering 79-100 (PPQTQTSTSGPSTSSSTSPSSS) has biased composition (low complexity). The span at 194–207 (RETLPQTTQNADGQ) shows a compositional bias: polar residues. The segment covering 208–219 (SNSTPTSHPSPS) has biased composition (low complexity). The segment covering 344–353 (GNATPSTNTS) has biased composition (polar residues). Low complexity-rich tracts occupy residues 482 to 502 (PGAA…APGA), 535 to 580 (SSTS…SVPS), and 641 to 652 (PVSTSPPQSASQ). Residues 653-672 (APPPPSSPAPPAHSAPPPAA) are compositionally biased toward pro residues. Positions 1068-1080 (CVKRELDNSEAQG) are enriched in basic and acidic residues.

Component of the bag6/bat3 complex.

The protein resides in the cytoplasm. Its subcellular location is the cytosol. The protein localises to the nucleus. It localises to the secreted. It is found in the extracellular exosome. Functionally, ATP-independent molecular chaperone preventing the aggregation of misfolded and hydrophobic patches-containing proteins. Functions as part of a cytosolic protein quality control complex, the bag6/bat3 complex, which maintains these client proteins in a soluble state and participates in their proper delivery to the endoplasmic reticulum or alternatively can promote their sorting to the proteasome where they undergo degradation. The bag6/bat3 complex is involved in the post-translational delivery of tail-anchored/type II transmembrane proteins to the endoplasmic reticulum membrane. Similarly, the bag6/bat3 complex also functions as a sorting platform for proteins of the secretory pathway that are mislocalized to the cytosol either delivering them to the proteasome for degradation or to the endoplasmic reticulum. The bag6/bat3 complex also plays a role in the endoplasmic reticulum-associated degradation (ERAD), a quality control mechanism that eliminates unwanted proteins of the endoplasmic reticulum through their retrotranslocation to the cytosol and their targeting to the proteasome. It maintains these retrotranslocated proteins in an unfolded yet soluble state condition in the cytosol to ensure their proper delivery to the proteasome. Also required for selective ubiquitin-mediated degradation of defective nascent chain polypeptides by the proteasome. Also involved in endoplasmic reticulum stress-induced pre-emptive quality control, a mechanism that selectively attenuates the translocation of newly synthesized proteins into the endoplasmic reticulum and reroutes them to the cytosol for proteasomal degradation. May ensure the proper degradation of these proteins and thereby protects the endoplasmic reticulum from protein overload upon stress. By stabilizing a large spectrum of proteins, may indirectly affect different biological processes including apoptosis. By controlling the steady-state expression of the IGF1R receptor, indirectly regulates the insulin-like growth factor receptor signaling pathway. Its function is as follows. When nuclear, may also act as a component of some chromatin regulator complex. The polypeptide is Large proline-rich protein bag6-B (Xenopus laevis (African clawed frog)).